A 702-amino-acid polypeptide reads, in one-letter code: Choline transporter-like protein 5-A (702 aa).

The chain crosses the membrane as a helical span at residues 21–41; sequence VLCCVLFVIVILGYIALGTVA. At 42-225 the chain is on the extracellular side; that stretch reads WIHGDPRKVI…KIVEDYASCW (184 aa). Residues N120, N173, and N180 are each glycosylated (N-linked (GlcNAc...) asparagine). A helical transmembrane segment spans residues 226–246; sequence YWIVIGLFIALVISLIFILLL. Over 247–249 the chain is Cytoplasmic; that stretch reads RFT. A helical transmembrane segment spans residues 250-270; it reads AGFLLWFIIFAVILLVAYGIW. Residues 271–308 lie on the Extracellular side of the membrane; that stretch reads HCYWEFAVLRETPGADVTISDIGFQTDLHVYLQLSQTW. The helical transmembrane segment at 309 to 329 threads the bilayer; it reads LVFMVTLGLTEASIVLMLIFL. The Cytoplasmic segment spans residues 330–334; the sequence is RKRVR. The chain crosses the membrane as a helical span at residues 335–355; the sequence is IAIALLREGSRAISYIMSALF. The Extracellular segment spans residues 356–357; that stretch reads YP. A helical membrane pass occupies residues 358–378; sequence IITFVLLAICISYWAMTALFL. Residues 379–443 lie on the Cytoplasmic side of the membrane; the sequence is ASSGDAVYKV…RYIFILQLCN (65 aa). The helical transmembrane segment at 444–464 threads the bilayer; it reads LLVFLWLVNFTIALGQCTVAG. The Extracellular segment spans residues 465-498; that stretch reads AFASYYWARRKPADIPPCPVFSSFSRALRYHTGS. Residues 499 to 519 form a helical membrane-spanning segment; the sequence is LAFGSLILAVVQLIRVILEYL. Over 520 to 593 the chain is Cytoplasmic; that stretch reads DHKLKGAHNA…RVAVLDKVTD (74 aa). The chain crosses the membrane as a helical span at residues 594 to 614; the sequence is FLLFLGKLLIAGSVGVIAFFL. The Extracellular segment spans residues 615 to 632; it reads FTRKIPIIQEEVPVLNYY. A helical transmembrane segment spans residues 633 to 653; it reads CVPLLTVILGSYLIAHSFFSV. The Cytoplasmic portion of the chain corresponds to 654–699; it reads YAMCVDTLFLCFCEDLERNDGTTAKPFFMSPGLKRILGKAEQSPKK.

It belongs to the CTL (choline transporter-like) family.

The protein resides in the cell membrane. It catalyses the reaction choline(out) + n H(+)(in) = choline(in) + n H(+)(out). Its function is as follows. Choline/H+ antiporter. This is Choline transporter-like protein 5-A (slc44a5a) from Danio rerio (Zebrafish).